Consider the following 330-residue polypeptide: Glycerol-3-phosphate dehydrogenase [NAD(P)+] (330 aa).

NADPH is bound by residues Trp13, Arg33, and Lys103. Sn-glycerol 3-phosphate contacts are provided by Lys103, Gly131, and Thr133. Ala135 is an NADPH binding site. Sn-glycerol 3-phosphate-binding residues include Lys186, Asp239, Ser249, Arg250, and Asn251. Residue Lys186 is the Proton acceptor of the active site. Arg250 is a binding site for NADPH. NADPH is bound by residues Val274 and Glu276.

Belongs to the NAD-dependent glycerol-3-phosphate dehydrogenase family.

The protein resides in the cytoplasm. The catalysed reaction is sn-glycerol 3-phosphate + NAD(+) = dihydroxyacetone phosphate + NADH + H(+). It catalyses the reaction sn-glycerol 3-phosphate + NADP(+) = dihydroxyacetone phosphate + NADPH + H(+). Its pathway is membrane lipid metabolism; glycerophospholipid metabolism. Its function is as follows. Catalyzes the reduction of the glycolytic intermediate dihydroxyacetone phosphate (DHAP) to sn-glycerol 3-phosphate (G3P), the key precursor for phospholipid synthesis. The protein is Glycerol-3-phosphate dehydrogenase [NAD(P)+] of Erythrobacter litoralis (strain HTCC2594).